The chain runs to 424 residues: Chloroquine resistance transporter (424 aa).

Positions Met-1 to Gly-10 are enriched in basic residues. A disordered region spans residues Met-1 to Glu-32. At Met-1–Asn-57 the chain is on the cytoplasmic side. Positions Pro-16–Asn-29 are enriched in basic and acidic residues. The chain crosses the membrane as a helical span at residues Ile-58–Ala-78. The Vacuolar segment spans residues Lys-79–Ser-89. Asn-87 is a glycosylation site (N-linked (GlcNAc...) asparagine). A helical membrane pass occupies residues Phe-90 to Met-110. Over Phe-111 to Asn-124 the chain is Cytoplasmic. A helical membrane pass occupies residues Phe-125 to Ile-145. Residues Gly-146–Asn-153 are Vacuolar-facing. Residues Ile-154 to Leu-174 traverse the membrane as a helical segment. At Arg-175–His-179 the chain is on the cytoplasmic side. A helical membrane pass occupies residues Leu-180–Leu-200. Topologically, residues Ser-201–Asn-208 are vacuolar. Residues Ser-209–Thr-229 traverse the membrane as a helical segment. The Cytoplasmic segment spans residues Arg-230–Ala-246. The chain crosses the membrane as a helical span at residues Val-247–Phe-267. Residues Leu-268–Lys-316 lie on the Vacuolar side of the membrane. Cystine bridges form between Cys-288–Cys-311 and Cys-300–Cys-308. The chain crosses the membrane as a helical span at residues Thr-317 to Glu-337. Topologically, residues Lys-338–Thr-345 are cytoplasmic. Residues Ile-346–Gly-366 form a helical membrane-spanning segment. Residues Asp-367–Asp-376 lie on the Vacuolar side of the membrane. The chain crosses the membrane as a helical span at residues Phe-377–Leu-397. Over Glu-398–His-424 the chain is Cytoplasmic.

Belongs to the CRT-like transporter family.

The protein resides in the vacuole membrane. Its function is as follows. Nutrient transporter. Involved in maintaining the osmotic homeostasis of the digestive vacuole. In Plasmodium vivax (strain Salvador I), this protein is Chloroquine resistance transporter.